A 361-amino-acid polypeptide reads, in one-letter code: Chorismate synthase (361 aa).

Positions 48 and 54 each coordinate NADP(+). FMN contacts are provided by residues 125 to 127 (RSS), 238 to 239 (NA), glycine 278, 293 to 297 (KPTSS), and arginine 319.

It belongs to the chorismate synthase family. As to quaternary structure, homotetramer. FMNH2 is required as a cofactor.

It catalyses the reaction 5-O-(1-carboxyvinyl)-3-phosphoshikimate = chorismate + phosphate. The protein operates within metabolic intermediate biosynthesis; chorismate biosynthesis; chorismate from D-erythrose 4-phosphate and phosphoenolpyruvate: step 7/7. In terms of biological role, catalyzes the anti-1,4-elimination of the C-3 phosphate and the C-6 proR hydrogen from 5-enolpyruvylshikimate-3-phosphate (EPSP) to yield chorismate, which is the branch point compound that serves as the starting substrate for the three terminal pathways of aromatic amino acid biosynthesis. This reaction introduces a second double bond into the aromatic ring system. The protein is Chorismate synthase of Escherichia coli (strain K12 / MC4100 / BW2952).